The chain runs to 195 residues: Probable serine/threonine-protein kinase BUD32 homolog (195 aa).

In terms of domain architecture, Protein kinase spans 1 to 195; the sequence is MKVYLGGEAE…GRYVERVSMG (195 aa). ATP is bound at residue lysine 12. The active-site Proton acceptor is aspartate 107.

Belongs to the protein kinase superfamily. Tyr protein kinase family. BUD32 subfamily.

It localises to the cytoplasm. The enzyme catalyses L-seryl-[protein] + ATP = O-phospho-L-seryl-[protein] + ADP + H(+). It carries out the reaction L-threonyl-[protein] + ATP = O-phospho-L-threonyl-[protein] + ADP + H(+). In terms of biological role, could be involved in the formation of a threonylcarbamoyl group on adenosine at position 37 (t(6)A37) in tRNAs that read codons beginning with adenine. The chain is Probable serine/threonine-protein kinase BUD32 homolog from Archaeoglobus fulgidus (strain ATCC 49558 / DSM 4304 / JCM 9628 / NBRC 100126 / VC-16).